We begin with the raw amino-acid sequence, 122 residues long: MIQMQTNLDVADNSGARRVMCIKVLGGSKRKYASIGDVIVVSIKEAIPRGRVKKGDVMKAVVVRTAKDIRRPDGSVIRFDTNAAVLIDNKKEPIGTRIFGPVPRELRAKNHMKIISLAPEVL.

It belongs to the universal ribosomal protein uL14 family. In terms of assembly, part of the 50S ribosomal subunit. Forms a cluster with proteins L3 and L19. In the 70S ribosome, L14 and L19 interact and together make contacts with the 16S rRNA in bridges B5 and B8.

Binds to 23S rRNA. Forms part of two intersubunit bridges in the 70S ribosome. The sequence is that of Large ribosomal subunit protein uL14 from Rhizobium etli (strain CIAT 652).